The following is a 302-amino-acid chain: tRNA pseudouridine synthase B (302 aa).

Residue Asp-38 is the Nucleophile of the active site.

The protein belongs to the pseudouridine synthase TruB family. Type 1 subfamily.

The catalysed reaction is uridine(55) in tRNA = pseudouridine(55) in tRNA. In terms of biological role, responsible for synthesis of pseudouridine from uracil-55 in the psi GC loop of transfer RNAs. This Geobacillus thermodenitrificans (strain NG80-2) protein is tRNA pseudouridine synthase B.